The chain runs to 227 residues: tRNA pseudouridine synthase B (227 aa).

Asp42 functions as the Nucleophile in the catalytic mechanism.

This sequence belongs to the pseudouridine synthase TruB family. Type 1 subfamily.

It carries out the reaction uridine(55) in tRNA = pseudouridine(55) in tRNA. In terms of biological role, responsible for synthesis of pseudouridine from uracil-55 in the psi GC loop of transfer RNAs. The sequence is that of tRNA pseudouridine synthase B from Ureaplasma parvum serovar 3 (strain ATCC 27815 / 27 / NCTC 11736).